The chain runs to 302 residues: Polyadenylate-binding protein 2 (302 aa).

Over residues M1 to G12 the composition is skewed to low complexity. The disordered stretch occupies residues M1 to E111. A2 carries the post-translational modification N-acetylalanine. The segment at A2–K141 is interaction with SKIP. R17 bears the Omega-N-methylarginine mark. S19 carries the post-translational modification Phosphoserine. A compositionally biased stretch (gly residues) spans G30–G47. A compositionally biased stretch (acidic residues) spans E51–E68. S52 carries the phosphoserine modification. Positions P73–G83 are enriched in pro residues. S91 is modified (phosphoserine). A coiled-coil region spans residues E111–P147. A stimulates PAPOLA region spans residues L115–M143. Phosphoserine occurs at positions 146 and 231. The RRM domain maps to R168–T245. Asymmetric dimethylarginine; alternate occurs at positions 234, 255, and 259. 3 positions are modified to omega-N-methylarginine; alternate: R234, R255, and R259. The strong poly(A) affinity and self-association stretch occupies residues R255–Y302. Residues R261, R263, R265, R273, R275, R283, R285, R287, R290, R292, and R294 each carry the asymmetric dimethylarginine modification. Residues S282–Y302 form an interaction with PAPOLA region.

Monomer and homooligomer. Identified in a IGF2BP1-dependent mRNP granule complex containing untranslated mRNAs. Binds RNA as a monomer and oligomerizes when bound to poly(A). Interacts with PAPOLA, but only in presence of oligo(A) RNA. Interacts with NUDT21/CPSF5 and transportin. Associates in a ternary complex with CPSF4 and NS/NS1 and interaction with NS/NS1, blocks nuclear export of host cell mRNAs. Associates in a single complex with SKIP and MYOD1 and interacts with SKIP in differentiated myocytes. May interact with SETX. Interacts (via RRM domain and C-terminal arginine-rich region) with ZFP36 (via hypophosphorylated form); this interaction occurs in the nucleus in a RNA-independent manner, decreases in presence of single-stranded poly(A) RNA-oligomer and in a p38-dependent-manner and may down-regulated RNA poly(A) polymerase activity. Component of the poly(A) tail exosome targeting (PAXT) complex composed of PABPN1, ZFC3H1 and MTREX. Interacts with ZFC3H1 in a RNase-insensitive manner. Interacts with FRG1. Interacts with ZC3H11A. Arginine dimethylation is asymmetric and involves PRMT1 and PRMT3. It does not influence the RNA binding properties. Ubiquitous.

Its subcellular location is the cytoplasm. The protein localises to the nucleus. It is found in the nucleus speckle. Involved in the 3'-end formation of mRNA precursors (pre-mRNA) by the addition of a poly(A) tail of 200-250 nt to the upstream cleavage product. Stimulates poly(A) polymerase (PAPOLA) conferring processivity on the poly(A) tail elongation reaction and also controls the poly(A) tail length. Increases the affinity of poly(A) polymerase for RNA. Is also present at various stages of mRNA metabolism including nucleocytoplasmic trafficking and nonsense-mediated decay (NMD) of mRNA. Cooperates with SKIP to synergistically activate E-box-mediated transcription through MYOD1 and may regulate the expression of muscle-specific genes. Binds to poly(A) and to poly(G) with high affinity. May protect the poly(A) tail from degradation. Subunit of the trimeric poly(A) tail exosome targeting (PAXT) complex, a complex that directs a subset of long and polyadenylated poly(A) RNAs for exosomal degradation. The RNA exosome is fundamental for the degradation of RNA in eukaryotic nuclei. Substrate targeting is facilitated by its cofactor MTREX, which links to RNA-binding protein adapters. This is Polyadenylate-binding protein 2 (Pabpn1) from Mus musculus (Mouse).